The following is a 272-amino-acid chain: ATP synthase subunit a (272 aa).

Helical transmembrane passes span 41–61 (TLNIDSMFFSVVLGLIFLALF), 102–122 (IAPLALTIFVWVFLMNLMDLV), 147–167 (DVNITLSMALGVFILILFYSI), 212–232 (LFGNMYAGELIFILIAGLLPW), and 243–263 (AIFHILIITLQAFIFMVLTIV).

It belongs to the ATPase A chain family. F-type ATPases have 2 components, CF(1) - the catalytic core - and CF(0) - the membrane proton channel. CF(1) has five subunits: alpha(3), beta(3), gamma(1), delta(1), epsilon(1). CF(0) has three main subunits: a(1), b(2) and c(9-12). The alpha and beta chains form an alternating ring which encloses part of the gamma chain. CF(1) is attached to CF(0) by a central stalk formed by the gamma and epsilon chains, while a peripheral stalk is formed by the delta and b chains.

The protein localises to the cell inner membrane. Key component of the proton channel; it plays a direct role in the translocation of protons across the membrane. The polypeptide is ATP synthase subunit a (Edwardsiella ictaluri (strain 93-146)).